A 429-amino-acid polypeptide reads, in one-letter code: Glucose-6-phosphate exchanger SLC37A4 (429 aa).

A run of 10 helical transmembrane segments spans residues 84–104, 105–125, 139–159, 167–187, 219–239, 260–280, 302–322, 329–349, 368–388, and 394–414; these read LLLVGLVNIFFAWSSTVPVFA, ALWFLNGLAQGLGWPPCGKVL, AILSTSMNLAGGLGPILATIL, STLALSGALCVVVSFLCLLLI, ELLLSPYLWVLSTGYLVVFGV, LVGSSYMSALEVGGLVGSIAA, GLLLFMMAGMTVSMYLFRVTV, LWILVLGAVFGFSSYGPIALF, IVGLMANVGGFLAGLPFSTIA, and STAFWVAEVICAASTAAFFLL.

Belongs to the major facilitator superfamily. Organophosphate:Pi antiporter (OPA) (TC 2.A.1.4) family. In terms of tissue distribution, mostly expressed in liver and kidney.

It is found in the endoplasmic reticulum membrane. The enzyme catalyses D-glucose 6-phosphate(in) + phosphate(out) = D-glucose 6-phosphate(out) + phosphate(in). With respect to regulation, inhibited by vanadate and chlorogenic acid. Its function is as follows. Inorganic phosphate and glucose-6-phosphate antiporter of the endoplasmic reticulum. Transports cytoplasmic glucose-6-phosphate into the lumen of the endoplasmic reticulum and translocates inorganic phosphate into the opposite direction. Forms with glucose-6-phosphatase the complex responsible for glucose production through glycogenolysis and gluconeogenesis. Hence, it plays a central role in homeostatic regulation of blood glucose levels. This Homo sapiens (Human) protein is Glucose-6-phosphate exchanger SLC37A4.